Here is a 215-residue protein sequence, read N- to C-terminus: Cytochrome b6 (215 aa).

The helical transmembrane segment at 32-52 (IFYCLGGITFTSFLVQVATGF) threads the bilayer. Cys-35 serves as a coordination point for heme c. Residues His-86 and His-100 each coordinate heme b. The next 3 helical transmembrane spans lie at 90–110 (ASMM…TGGF), 116–136 (LTWV…VTGY), and 186–206 (LHTF…FLMI). The heme b site is built by His-187 and His-202.

Belongs to the cytochrome b family. PetB subfamily. The 4 large subunits of the cytochrome b6-f complex are cytochrome b6, subunit IV (17 kDa polypeptide, PetD), cytochrome f and the Rieske protein, while the 4 small subunits are PetG, PetL, PetM and PetN. The complex functions as a dimer. The cofactor is heme b. It depends on heme c as a cofactor.

The protein localises to the plastid. It is found in the chloroplast thylakoid membrane. Its function is as follows. Component of the cytochrome b6-f complex, which mediates electron transfer between photosystem II (PSII) and photosystem I (PSI), cyclic electron flow around PSI, and state transitions. In Oltmannsiellopsis viridis (Marine flagellate), this protein is Cytochrome b6.